The sequence spans 354 residues: Serum paraoxonase/arylesterase 2 (354 aa).

A disulfide bridge connects residues Cys42 and Cys352. The Ca(2+) site is built by Asp53 and Asp54. His114 acts as the Proton acceptor in catalysis. Positions 116, 167, 168, and 223 each coordinate Ca(2+). An N-linked (GlcNAc...) asparagine glycan is attached at Asn254. Ca(2+) is bound by residues Asp268 and Asn269. N-linked (GlcNAc...) asparagine glycans are attached at residues Asn269 and Asn323.

This sequence belongs to the paraoxonase family. As to quaternary structure, homotrimer. Requires Ca(2+) as cofactor. In terms of processing, glycosylated. Post-translationally, the signal sequence is not cleaved.

The protein resides in the membrane. It catalyses the reaction a phenyl acetate + H2O = a phenol + acetate + H(+). The catalysed reaction is an N-acyl-L-homoserine lactone + H2O = an N-acyl-L-homoserine + H(+). In terms of biological role, capable of hydrolyzing lactones and a number of aromatic carboxylic acid esters. The sequence is that of Serum paraoxonase/arylesterase 2 (PON2) from Canis lupus familiaris (Dog).